Consider the following 177-residue polypeptide: UPF0114 protein jhp_0175 (177 aa).

A run of 3 helical transmembrane segments spans residues 15–35, 54–74, and 145–165; these read WLLA…GYVF, LVLS…VLMV, and PIFW…LTAV.

This sequence belongs to the UPF0114 family.

It localises to the cell membrane. The chain is UPF0114 protein jhp_0175 from Helicobacter pylori (strain J99 / ATCC 700824) (Campylobacter pylori J99).